The sequence spans 122 residues: MIQQESRLRVADNTGAKEILTIRVLGGSGRRYAGIGDVIVATVKDAIPGGNVKKGDVVKAVVVRTKKQRRRPDGSYIRFDENAAVILKNDGDPRGTRIFGPVGRELRDKKFMKIVSLAPEVL.

The protein belongs to the universal ribosomal protein uL14 family. As to quaternary structure, part of the 50S ribosomal subunit. Forms a cluster with proteins L3 and L19. In the 70S ribosome, L14 and L19 interact and together make contacts with the 16S rRNA in bridges B5 and B8.

Functionally, binds to 23S rRNA. Forms part of two intersubunit bridges in the 70S ribosome. The chain is Large ribosomal subunit protein uL14 from Kocuria rhizophila (strain ATCC 9341 / DSM 348 / NBRC 103217 / DC2201).